A 1346-amino-acid polypeptide reads, in one-letter code: Cytokinesis protein sepH (1346 aa).

Positions 1–50 (MVSRSNEGPEAPHPASRTPGAPAKGRLTRLGSSPSKRDDKAKDDRMGKTS) are disordered. The segment covering 35-50 (SKRDDKAKDDRMGKTS) has biased composition (basic and acidic residues). The 251-residue stretch at 60 to 310 (YQLGDCLGRG…ARKLLKHPWI (251 aa)) folds into the Protein kinase domain. Residues 66-74 (LGRGAFGSV) and Lys-89 each bind ATP. Asp-182 acts as the Proton acceptor in catalysis. Disordered stretches follow at residues 342-380 (RSPESNALRRGTRNENQNPPSLRLDTRHTPTKVTLPSPV), 446-497 (DESF…HMRR), and 1211-1295 (LCKL…AGAS). 2 stretches are compositionally biased toward polar residues: residues 477 to 489 (QQANSGTSQSQNG) and 1220 to 1249 (RGSTSATSPGLLANQSAPVTPQLSRQNQSK).

Belongs to the protein kinase superfamily. Ser/Thr protein kinase family. CDC7 subfamily. Mg(2+) is required as a cofactor.

It catalyses the reaction L-seryl-[protein] + ATP = O-phospho-L-seryl-[protein] + ADP + H(+). It carries out the reaction L-threonyl-[protein] + ATP = O-phospho-L-threonyl-[protein] + ADP + H(+). Functionally, required for early events during cytokinesis including localization of cytoskeletal components to the cytokinetic ring. The sequence is that of Cytokinesis protein sepH from Emericella nidulans (strain FGSC A4 / ATCC 38163 / CBS 112.46 / NRRL 194 / M139) (Aspergillus nidulans).